The following is a 176-amino-acid chain: Inorganic pyrophosphatase (176 aa).

Residues K30, R44, and Y56 each contribute to the substrate site. The Mg(2+) site is built by D66, D71, and D103. Residue Y140 coordinates substrate.

This sequence belongs to the PPase family. In terms of assembly, homohexamer. The cofactor is Mg(2+).

The protein resides in the cytoplasm. It carries out the reaction diphosphate + H2O = 2 phosphate + H(+). Catalyzes the hydrolysis of inorganic pyrophosphate (PPi) forming two phosphate ions. This chain is Inorganic pyrophosphatase, found in Methanothermobacter thermautotrophicus (strain ATCC 29096 / DSM 1053 / JCM 10044 / NBRC 100330 / Delta H) (Methanobacterium thermoautotrophicum).